The following is a 302-amino-acid chain: Sulfate adenylyltransferase subunit 2 (302 aa).

This sequence belongs to the PAPS reductase family. CysD subfamily. In terms of assembly, heterodimer composed of CysD, the smaller subunit, and CysN.

The enzyme catalyses sulfate + ATP + H(+) = adenosine 5'-phosphosulfate + diphosphate. Its pathway is sulfur metabolism; hydrogen sulfide biosynthesis; sulfite from sulfate: step 1/3. With CysN forms the ATP sulfurylase (ATPS) that catalyzes the adenylation of sulfate producing adenosine 5'-phosphosulfate (APS) and diphosphate, the first enzymatic step in sulfur assimilation pathway. APS synthesis involves the formation of a high-energy phosphoric-sulfuric acid anhydride bond driven by GTP hydrolysis by CysN coupled to ATP hydrolysis by CysD. This is Sulfate adenylyltransferase subunit 2 from Erwinia tasmaniensis (strain DSM 17950 / CFBP 7177 / CIP 109463 / NCPPB 4357 / Et1/99).